Here is a 226-residue protein sequence, read N- to C-terminus: ATP synthase subunit a (226 aa).

6 helical membrane passes run 17–37, 79–99, 105–125, 134–154, 176–196, and 199–219; these read FSYF…AMMA, LVAT…LPGF, SLNL…FEGI, FAHF…IEIV, LFLM…AYVL, and FMAF…LAGA.

It belongs to the ATPase A chain family. As to quaternary structure, F-type ATPases have 2 components, CF(1) - the catalytic core - and CF(0) - the membrane proton channel. CF(1) has five subunits: alpha(3), beta(3), gamma(1), delta(1), epsilon(1). CF(0) has three main subunits: a(1), b(2) and c(9-12). The alpha and beta chains form an alternating ring which encloses part of the gamma chain. CF(1) is attached to CF(0) by a central stalk formed by the gamma and epsilon chains, while a peripheral stalk is formed by the delta and b chains.

It is found in the cell inner membrane. Key component of the proton channel; it plays a direct role in the translocation of protons across the membrane. In Campylobacter jejuni subsp. doylei (strain ATCC BAA-1458 / RM4099 / 269.97), this protein is ATP synthase subunit a.